We begin with the raw amino-acid sequence, 528 residues long: MDPAGRARGQGATAGGLLLRAAAAAKGLREDLWGAAALPWRSLSRIPKREGLGEEDTAVAGHELLLPNERSFQNAAKSNNLDLMEKLFEKKVNINVVNNMNRTALHFAVGRNHLSAVDFLLKHKARVDVADKHGLTVIHLAAWSGSLEVMLMLVKAGADQRAKNQDGMSALHFATQSNHVRIVEYLIQDLHLKDLNQPDEKGRKPFLLAAERGHVEMIEKLTFLNLHTSEKDKGGNTALHLAAKHGHSPAVQVLLAQWQDINEMNELNISSLQIATRNGHASLVNFLLSENVDLHQKVEPKESPLHLVVINNHITVVNSLLSAQHDIDILNQKQQTPLHVAADRGNVELVETLLKAGCDLKAVDKQGKTALAVASRSNHSLVVGMLIKAERYYAWREEHHESIRDPSTGFTLTFKQDHSLETRHIRTLLWDLAYHQLKANEWQRLARSWNFTDDQIRAIEEQWSGNESFREHGHRALLIWLHGTLMTQGDPAKQLYEELVHAGFPKLAEKTRHFKSKTDSNSKKCVVS.

10 ANK repeats span residues 67–96 (PNER…NINV), 100–129 (MNRT…RVDV), 133–162 (HGLT…DQRA), 166–197 (DGMS…DLNQ), 201–230 (KGRK…HTSE), 234–263 (GGNT…DINE), 267–296 (LNIS…DLHQ), 300–329 (PKES…DIDI), 333–362 (KQQT…DLKA), and 366–395 (QGKT…YYAW). Residues 427 to 515 (TLLWDLAYHQ…KLAEKTRHFK (89 aa)) enclose the Death domain.

The protein is Ankyrin repeat and death domain-containing protein 1B (ANKDD1B) of Homo sapiens (Human).